The primary structure comprises 311 residues: Phosphoribosylaminoimidazole-succinocarboxamide synthase (311 aa).

This sequence belongs to the SAICAR synthetase family.

The catalysed reaction is 5-amino-1-(5-phospho-D-ribosyl)imidazole-4-carboxylate + L-aspartate + ATP = (2S)-2-[5-amino-1-(5-phospho-beta-D-ribosyl)imidazole-4-carboxamido]succinate + ADP + phosphate + 2 H(+). The protein operates within purine metabolism; IMP biosynthesis via de novo pathway; 5-amino-1-(5-phospho-D-ribosyl)imidazole-4-carboxamide from 5-amino-1-(5-phospho-D-ribosyl)imidazole-4-carboxylate: step 1/2. In Azoarcus sp. (strain BH72), this protein is Phosphoribosylaminoimidazole-succinocarboxamide synthase.